A 270-amino-acid chain; its full sequence is MAPRVFYISDGTAITAEVFGHAVLSQFPIEFEALTIPFVETLVKAEKVKLQINDCFITTGERPLVFHSIVNPDIRNVIYSSEGMDYDFLNTFVAPLEQHLGIQACPVLHRTHGKGNHSYEARIDAINFSMENDDGQTMKHMDKADIILLGVSRCGKTPSSLYLSMQFGIKAANYPFTEDDMDNLKLPDALKRNKNKLFGLTIDPNRLHEIRQSRMENSRYSSLRQCRLEVKEVEMMYKRERIPFVDTTNHSVEEIATKILDVTGLARHMF.

150 to 157 (GVSRCGKT) provides a ligand contact to ADP.

This sequence belongs to the pyruvate, phosphate/water dikinase regulatory protein family. PSRP subfamily.

It catalyses the reaction [pyruvate, water dikinase] + ADP = [pyruvate, water dikinase]-phosphate + AMP + H(+). The enzyme catalyses [pyruvate, water dikinase]-phosphate + phosphate + H(+) = [pyruvate, water dikinase] + diphosphate. In terms of biological role, bifunctional serine/threonine kinase and phosphorylase involved in the regulation of the phosphoenolpyruvate synthase (PEPS) by catalyzing its phosphorylation/dephosphorylation. The protein is Putative phosphoenolpyruvate synthase regulatory protein of Shewanella denitrificans (strain OS217 / ATCC BAA-1090 / DSM 15013).